The primary structure comprises 88 residues: Cell division topological specificity factor (88 aa).

This sequence belongs to the MinE family.

Prevents the cell division inhibition by proteins MinC and MinD at internal division sites while permitting inhibition at polar sites. This ensures cell division at the proper site by restricting the formation of a division septum at the midpoint of the long axis of the cell. The protein is Cell division topological specificity factor of Pseudoalteromonas translucida (strain TAC 125).